The chain runs to 71 residues: Small ribosomal subunit protein bS21 (71 aa).

It belongs to the bacterial ribosomal protein bS21 family.

The protein is Small ribosomal subunit protein bS21 of Dichelobacter nodosus (strain VCS1703A).